Consider the following 60-residue polypeptide: Mastoparan-VT4 (60 aa).

The N-terminal stretch at 1–27 is a signal peptide; that stretch reads MKNPILILFTAFIALLGFFGMSAEALA. AXPX repeat units lie at residues 27-30, 31-34, 35-38, and 41-44; these read ADPK, ADPL, AGPN, and ADPE. The propeptide occupies 28 to 45; the sequence is DPKADPLAGPNPDADPEA. Residue L59 is modified to Leucine amide.

The protein belongs to the MCD family. Mastoparan subfamily. In terms of tissue distribution, expressed by the venom gland.

The protein resides in the secreted. Functionally, the synthetic peptide shows antimicrobial activities against Gram-negative bacteria (but not against all strains tested), Gram-positive bacteria (not all strains tested) and the fungi C.albicans and C.parapsilosis. Exhibits little hemolytic activity against washed human erythrocytes. This Vespa tropica (Greater banded hornet) protein is Mastoparan-VT4.